The primary structure comprises 208 residues: Mediator of RNA polymerase II transcription subunit 21 (208 aa).

Positions 52–122 are disordered; it reads TKNSTAPPAP…PDSPRTFASR (71 aa). Over residues 63–83 the composition is skewed to low complexity; it reads GAPAGSQASPQQQSAQIPGQQ. Residues 84–104 are compositionally biased toward gly residues; the sequence is QQGGGDAGQTPGAGGGTGGAG. Positions 146–195 form a coiled coil; it reads GIDSSEAEQERRIKELEKELRSAEEDREQRVRELRKLRKKLENVLGAVEV.

The protein belongs to the Mediator complex subunit 21 family. In terms of assembly, component of the Mediator complex.

It is found in the nucleus. Its function is as follows. Component of the Mediator complex, a coactivator involved in the regulated transcription of nearly all RNA polymerase II-dependent genes. Mediator functions as a bridge to convey information from gene-specific regulatory proteins to the basal RNA polymerase II transcription machinery. Mediator is recruited to promoters by direct interactions with regulatory proteins and serves as a scaffold for the assembly of a functional preinitiation complex with RNA polymerase II and the general transcription factors. In Aspergillus oryzae (strain ATCC 42149 / RIB 40) (Yellow koji mold), this protein is Mediator of RNA polymerase II transcription subunit 21 (srb7).